A 451-amino-acid chain; its full sequence is GABA transporter 1 (451 aa).

A run of 11 helical transmembrane segments spans residues 35–55 (CGFH…PYAF), 57–77 (FLGW…TFYS), 115–135 (VGPI…LLGG), 153–173 (LFEF…FPSF), 182–202 (LSLL…IYIG), 222–242 (VFGI…GIIP), 262–282 (MCYL…YWAF), 308–328 (FIFL…VVYL), 356–376 (LVVR…LPFF), 382–402 (LLGA…FFNF), and 411–431 (FIFW…VIAM).

This sequence belongs to the amino acid/polyamine transporter 2 family. Amino acid/auxin permease (AAAP) (TC 2.A.18.2) subfamily. Highly expressed in flowers and at lower levels in roots, leaves and stems.

Its subcellular location is the cell membrane. Functionally, high affinity gamma-aminobutyric acid (GABA) transporter probably involved in GABA uptake into cells. When expressed in a heterologous system (Xenopus oocytes), imports GABA, butylamine, beta- and L-Alanine, 5-aminovaleric acid, 6-aminocaproic acid and 8-aminocaprylic acid, but does not mediate the transport of proline or glycine betaine. This is GABA transporter 1 (GAT1) from Arabidopsis thaliana (Mouse-ear cress).